We begin with the raw amino-acid sequence, 209 residues long: Probable glutathione peroxidase 8 (209 aa).

At M1 the chain carries N-acetylmethionine. A helical membrane pass occupies residues 18–40 (IFAVLLSMVLCTVMLFLLQLKFL). Residue C79 is part of the active site.

Belongs to the glutathione peroxidase family.

The protein localises to the membrane. It catalyses the reaction 2 glutathione + H2O2 = glutathione disulfide + 2 H2O. The sequence is that of Probable glutathione peroxidase 8 (Gpx8) from Mus musculus (Mouse).